The sequence spans 278 residues: Small ribosomal subunit protein uS2 (278 aa).

Positions 235–278 (QRRKDHGEGGQQAAGGGRGQRDEINVYQGGRGGRGGGPRQQQAS) are disordered. Gly residues-rich tracts occupy residues 243–252 (GGQQAAGGGR) and 263–272 (GGRGGRGGGP).

Belongs to the universal ribosomal protein uS2 family.

This chain is Small ribosomal subunit protein uS2, found in Sorangium cellulosum (strain So ce56) (Polyangium cellulosum (strain So ce56)).